An 81-amino-acid chain; its full sequence is Cytochrome b559 subunit alpha (81 aa).

The chain crosses the membrane as a helical span at residues 21-35 (VIHSITIPSLFVSGW). Heme is bound at residue histidine 23.

Belongs to the PsbE/PsbF family. As to quaternary structure, heterodimer of an alpha subunit and a beta subunit. PSII is composed of 1 copy each of membrane proteins PsbA, PsbB, PsbC, PsbD, PsbE, PsbF, PsbH, PsbI, PsbJ, PsbK, PsbL, PsbM, PsbT, PsbX, PsbY, PsbZ, Psb30/Ycf12, at least 3 peripheral proteins of the oxygen-evolving complex and a large number of cofactors. It forms dimeric complexes. It depends on heme b as a cofactor.

It is found in the plastid. Its subcellular location is the chloroplast thylakoid membrane. This b-type cytochrome is tightly associated with the reaction center of photosystem II (PSII). PSII is a light-driven water:plastoquinone oxidoreductase that uses light energy to abstract electrons from H(2)O, generating O(2) and a proton gradient subsequently used for ATP formation. It consists of a core antenna complex that captures photons, and an electron transfer chain that converts photonic excitation into a charge separation. The chain is Cytochrome b559 subunit alpha from Mesostigma viride (Green alga).